The sequence spans 429 residues: Enolase (429 aa).

Residue glutamine 163 coordinates (2R)-2-phosphoglycerate. Glutamate 205 (proton donor) is an active-site residue. Mg(2+)-binding residues include aspartate 242, glutamate 286, and aspartate 313. Residues lysine 338, arginine 367, serine 368, and lysine 389 each coordinate (2R)-2-phosphoglycerate. Lysine 338 serves as the catalytic Proton acceptor.

This sequence belongs to the enolase family. It depends on Mg(2+) as a cofactor.

The protein resides in the cytoplasm. It localises to the secreted. It is found in the cell surface. It carries out the reaction (2R)-2-phosphoglycerate = phosphoenolpyruvate + H2O. Its pathway is carbohydrate degradation; glycolysis; pyruvate from D-glyceraldehyde 3-phosphate: step 4/5. Catalyzes the reversible conversion of 2-phosphoglycerate (2-PG) into phosphoenolpyruvate (PEP). It is essential for the degradation of carbohydrates via glycolysis. The sequence is that of Enolase from Geotalea uraniireducens (strain Rf4) (Geobacter uraniireducens).